Reading from the N-terminus, the 225-residue chain is Probable septum site-determining protein MinC (225 aa).

This sequence belongs to the MinC family. In terms of assembly, interacts with MinD and FtsZ.

Its function is as follows. Cell division inhibitor that blocks the formation of polar Z ring septums. Rapidly oscillates between the poles of the cell to destabilize FtsZ filaments that have formed before they mature into polar Z rings. Prevents FtsZ polymerization. This is Probable septum site-determining protein MinC from Listeria monocytogenes serotype 4b (strain CLIP80459).